Reading from the N-terminus, the 362-residue chain is Class I histocompatibility antigen, Gogo-B*0101 alpha chain (362 aa).

Positions 1-24 (MRVTAPRTLLLLLSAALALTETWA) are cleaved as a signal peptide. Residues 25-114 (GSHSMRYFDT…ALRYYNQSEA (90 aa)) are alpha-1. At 25–308 (GSHSMRYFDT…EPSSQSTIPI (284 aa)) the chain is on the extracellular side. Asn110 carries N-linked (GlcNAc...) asparagine glycosylation. Residues 115 to 206 (GSHTIQRMFG…ENGRETLQRA (92 aa)) form an alpha-2 region. 2 disulfides stabilise this stretch: Cys125-Cys188 and Cys227-Cys283. The interval 207–298 (DTPKTHVTHH…GLPKPLTLRW (92 aa)) is alpha-3. The 87-residue stretch at 209-295 (PKTHVTHHPI…QHEGLPKPLT (87 aa)) folds into the Ig-like C1-type domain. Residues 299–308 (EPSSQSTIPI) are connecting peptide. A helical membrane pass occupies residues 309 to 332 (VGIVAGLAVLAVVVIGAVVTAVIC). Residues 333 to 362 (RRKSSGGKGGSYSQAASSDSAQGSDVSLTA) lie on the Cytoplasmic side of the membrane. Residues 335–362 (KSSGGKGGSYSQAASSDSAQGSDVSLTA) form a disordered region. Positions 343-362 (SYSQAASSDSAQGSDVSLTA) are enriched in low complexity. Ser356 and Ser359 each carry phosphoserine.

This sequence belongs to the MHC class I family. In terms of assembly, heterodimer of an alpha chain and a beta chain (beta-2-microglobulin).

It localises to the membrane. Functionally, involved in the presentation of foreign antigens to the immune system. The chain is Class I histocompatibility antigen, Gogo-B*0101 alpha chain from Gorilla gorilla gorilla (Western lowland gorilla).